A 216-amino-acid chain; its full sequence is MNIILLGPPGAGKGTQAQRLVERHGMKQLSTGDMLRAAVKAETPVGLKAKAVMEAGQLVSDEIVSALIGDELDAMPAGQGAIFDGYPRTAPQAESLDAILESRGRKLDHVIELDVNEDALVERITGRYTCATCGKGYHDKFEKPAVEGTCDKCGGHEFKRRPDDNEETVRTRMAEYRAKTAPILPIYESRGIVSRVDGMADMDDVTAAIEAILAAR.

10–15 (GAGKGT) is an ATP binding site. The tract at residues 30 to 59 (STGDMLRAAVKAETPVGLKAKAVMEAGQLV) is NMP. AMP-binding positions include threonine 31, arginine 36, 57–59 (QLV), 85–88 (GYPR), and glutamine 92. The segment at 126 to 164 (GRYTCATCGKGYHDKFEKPAVEGTCDKCGGHEFKRRPDD) is LID. Residue arginine 127 participates in ATP binding. The Zn(2+) site is built by cysteine 130, cysteine 133, cysteine 150, and cysteine 153. Arginine 161 and arginine 172 together coordinate AMP. Alanine 200 serves as a coordination point for ATP.

Belongs to the adenylate kinase family. As to quaternary structure, monomer.

Its subcellular location is the cytoplasm. It catalyses the reaction AMP + ATP = 2 ADP. It participates in purine metabolism; AMP biosynthesis via salvage pathway; AMP from ADP: step 1/1. In terms of biological role, catalyzes the reversible transfer of the terminal phosphate group between ATP and AMP. Plays an important role in cellular energy homeostasis and in adenine nucleotide metabolism. This is Adenylate kinase from Novosphingobium aromaticivorans (strain ATCC 700278 / DSM 12444 / CCUG 56034 / CIP 105152 / NBRC 16084 / F199).